Here is a 132-residue protein sequence, read N- to C-terminus: MAVTPEDLRYTEEHEWVRRIGPTRVRVGITDYAQSQLGDVVYVQLPDEQREAAAGESIAEVESTKSVSDIYAPLAAKVVAVNEELSNAPETLNADPYGAGWLFELEVADAAALDVTLGELLDAAGYQGVIGG.

The region spanning 24-106 (RVRVGITDYA…YGAGWLFELE (83 aa)) is the Lipoyl-binding domain. At K65 the chain carries N6-lipoyllysine.

This sequence belongs to the GcvH family. The glycine cleavage system is composed of four proteins: P, T, L and H. (R)-lipoate serves as cofactor.

The glycine cleavage system catalyzes the degradation of glycine. The H protein shuttles the methylamine group of glycine from the P protein to the T protein. The chain is Glycine cleavage system H protein from Nocardia farcinica (strain IFM 10152).